Reading from the N-terminus, the 465-residue chain is E3 ubiquitin-protein ligase TRIM38 (465 aa).

An RING-type zinc finger spans residues 16–63 (CSICLSLMTNPVSINCGHSYCHLCITDFFKNPSQKQLRQETFCCPQCR). Residue S70 is modified to Phosphoserine. The B box-type zinc-finger motif lies at 88 to 129 (DQEMSCEEHGEQFHLFCEDEGQLICWRCERAPQHKGHTTALV). Positions 93, 96, 115, and 121 each coordinate Zn(2+). A B30.2/SPRY domain is found at 274–465 (CNVSKLYFDV…SPLFLPPPGD (192 aa)).

In terms of assembly, interacts (via B30.2/SPRY domain) with TAB2 and TAB3. Ubiquitous.

It is found in the cytoplasm. It catalyses the reaction S-ubiquitinyl-[E2 ubiquitin-conjugating enzyme]-L-cysteine + [acceptor protein]-L-lysine = [E2 ubiquitin-conjugating enzyme]-L-cysteine + N(6)-ubiquitinyl-[acceptor protein]-L-lysine.. It participates in protein modification; protein ubiquitination. The protein operates within protein modification; protein sumoylation. Functionally, E3 ubiquitin-protein and E3 SUMO-protein ligase that acts as a regulator of innate immunity. Acts as a negative regulator of type I interferon IFN-beta production by catalyzing 'Lys-48'-linked polyubiquitination of AZI2/NAP1, leading to its degradation. Mediates 'Lys-48'-linked polyubiquitination and proteasomal degradation of the critical TLR adapter TICAM1, inhibiting TLR3-mediated type I interferon signaling. Acts as positive regulator of the cGAS-STING pathway by acting as a E3 SUMO-protein ligase: mediates sumoylation of CGAS and STING, preventing their degradation and thereby activating the innate immune response to DNA virus. Also acts as a negative regulator of NF-kappa-B signaling independently of its E3 protein ligase activity by promoting lysosome-dependent degradation of TAB2 and TAB3 adapters. The chain is E3 ubiquitin-protein ligase TRIM38 from Homo sapiens (Human).